A 585-amino-acid polypeptide reads, in one-letter code: Formate--tetrahydrofolate ligase (585 aa).

65 to 72 (TPHGEGKT) contributes to the ATP binding site.

It belongs to the formate--tetrahydrofolate ligase family.

It carries out the reaction (6S)-5,6,7,8-tetrahydrofolate + formate + ATP = (6R)-10-formyltetrahydrofolate + ADP + phosphate. It functions in the pathway one-carbon metabolism; tetrahydrofolate interconversion. The sequence is that of Formate--tetrahydrofolate ligase from Shewanella baltica (strain OS155 / ATCC BAA-1091).